Consider the following 433-residue polypeptide: MANILIQGATVLTMEGPDGVYRDGEIAIAGNSILSVGPRGSVPEGFRPGRSIDGTGMVAMPGFVNCHTHAAMTLLRSYADDMPLMKWLSEKIWPVEERLQPEDIYWGTMLCCLEMIKSGTTTFADMYFSMERVAAAVEESGMRACLSRGMIGVGSGARKAIDESLSFVREWNGGADGRITAMFGPHAPYTCPPEYLKKVVDLAAREGAGIHIHVAETRDEIEQIRAGYGTTPVRYLDAAGVFELPVLAAHCVHLDEGDIEILSAKRVGIAHCPESNMKLASGIAPVTELLQAGAAVGLGTDGAASNNNLDMLEEMRSASLLHKVSTGDPLALPSFEALRMATAGGALALGLKDVGLLKPGMKADLILVDFRRPHLCPQHDLIAHLVYAAQSADVDTVIINGKVVMEKRQVLNLDEEKIMAEAQKRALRLVNRE.

Zn(2+)-binding residues include H67 and H69. Positions 96, 148, 158, and 186 each coordinate substrate. H213 contacts Zn(2+). Positions 216 and 301 each coordinate substrate. D301 is a binding site for Zn(2+).

Belongs to the metallo-dependent hydrolases superfamily. MTA/SAH deaminase family. It depends on Zn(2+) as a cofactor.

It catalyses the reaction S-adenosyl-L-homocysteine + H2O + H(+) = S-inosyl-L-homocysteine + NH4(+). It carries out the reaction S-methyl-5'-thioadenosine + H2O + H(+) = S-methyl-5'-thioinosine + NH4(+). Its function is as follows. Catalyzes the deamination of 5-methylthioadenosine and S-adenosyl-L-homocysteine into 5-methylthioinosine and S-inosyl-L-homocysteine, respectively. Is also able to deaminate adenosine. This Pelotomaculum thermopropionicum (strain DSM 13744 / JCM 10971 / SI) protein is 5-methylthioadenosine/S-adenosylhomocysteine deaminase.